The sequence spans 66 residues: Muscarinic toxin 4 (66 aa).

Cystine bridges form between Cys3–Cys24, Cys17–Cys42, Cys46–Cys58, and Cys59–Cys64.

It belongs to the three-finger toxin family. Short-chain subfamily. Aminergic toxin sub-subfamily. In terms of assembly, monomer. Expressed by the venom gland.

The protein resides in the secreted. Functionally, binds to the muscarinic acetylcholine receptor (CHRM). The chain is Muscarinic toxin 4 from Dendroaspis angusticeps (Eastern green mamba).